Reading from the N-terminus, the 212-residue chain is Phosphoribosylglycinamide formyltransferase (212 aa).

A N(1)-(5-phospho-beta-D-ribosyl)glycinamide-binding site is contributed by 11-13; the sequence is GSN. (6R)-10-formyltetrahydrofolate-binding positions include arginine 64, 89–92, and asparagine 106; that span reads MRIL. Histidine 108 serves as the catalytic Proton donor. 140–144 contributes to the (6R)-10-formyltetrahydrofolate binding site; that stretch reads TDELD. 170–173 contacts N(1)-(5-phospho-beta-D-ribosyl)glycinamide; it reads QTQE.

The protein belongs to the GART family. As to quaternary structure, monomer. Homodimer below pH 6.8.

The enzyme catalyses N(1)-(5-phospho-beta-D-ribosyl)glycinamide + (6R)-10-formyltetrahydrofolate = N(2)-formyl-N(1)-(5-phospho-beta-D-ribosyl)glycinamide + (6S)-5,6,7,8-tetrahydrofolate + H(+). It functions in the pathway purine metabolism; IMP biosynthesis via de novo pathway; N(2)-formyl-N(1)-(5-phospho-D-ribosyl)glycinamide from N(1)-(5-phospho-D-ribosyl)glycinamide (10-formyl THF route): step 1/1. With respect to regulation, inhibited by N10-(bromoacetyl)-5,8-dideazafolate. In terms of biological role, catalyzes the transfer of a formyl group from 10-formyltetrahydrofolate to 5-phospho-ribosyl-glycinamide (GAR), producing 5-phospho-ribosyl-N-formylglycinamide (FGAR) and tetrahydrofolate. This Escherichia coli (strain K12) protein is Phosphoribosylglycinamide formyltransferase.